The following is a 417-amino-acid chain: Gamma-glutamyl phosphate reductase (417 aa).

It belongs to the gamma-glutamyl phosphate reductase family.

It localises to the cytoplasm. It catalyses the reaction L-glutamate 5-semialdehyde + phosphate + NADP(+) = L-glutamyl 5-phosphate + NADPH + H(+). It participates in amino-acid biosynthesis; L-proline biosynthesis; L-glutamate 5-semialdehyde from L-glutamate: step 2/2. Functionally, catalyzes the NADPH-dependent reduction of L-glutamate 5-phosphate into L-glutamate 5-semialdehyde and phosphate. The product spontaneously undergoes cyclization to form 1-pyrroline-5-carboxylate. This Escherichia coli O6:H1 (strain CFT073 / ATCC 700928 / UPEC) protein is Gamma-glutamyl phosphate reductase.